The following is an 88-amino-acid chain: Small ribosomal subunit protein uS15 (88 aa).

The protein belongs to the universal ribosomal protein uS15 family. As to quaternary structure, part of the 30S ribosomal subunit. Forms a bridge to the 50S subunit in the 70S ribosome, contacting the 23S rRNA.

In terms of biological role, one of the primary rRNA binding proteins, it binds directly to 16S rRNA where it helps nucleate assembly of the platform of the 30S subunit by binding and bridging several RNA helices of the 16S rRNA. Forms an intersubunit bridge (bridge B4) with the 23S rRNA of the 50S subunit in the ribosome. The sequence is that of Small ribosomal subunit protein uS15 from Thermoanaerobacter pseudethanolicus (strain ATCC 33223 / 39E) (Clostridium thermohydrosulfuricum).